The sequence spans 163 residues: Arginine repressor (163 aa).

It belongs to the ArgR family.

It localises to the cytoplasm. The protein operates within amino-acid biosynthesis; L-arginine biosynthesis [regulation]. Its function is as follows. Regulates arginine biosynthesis genes. This Corynebacterium diphtheriae (strain ATCC 700971 / NCTC 13129 / Biotype gravis) protein is Arginine repressor.